A 1057-amino-acid polypeptide reads, in one-letter code: MGSLGSSQLKPFNKAPIDFVSTKRQPGAVCSLPELVDYNAQHNASHNFCIQGKPGGEFDTFTHADFKVAAANCAKWLKANLPLGASQAPNAITKNAPVALFMESDFGLVVHEFALLSLGIPPLVLSVRLPPNAIMHLLKSTGATSFIVSQKLSGPAKPALAALAANGIATAVGNPYTSFLEPGVDVASKGTFEVPENPDDITLLLHSSGTTGLPKPIPISHRMLMFAVSTAKFDTEDEAQGLNVSSLPLFHGFGLVAPGISMTVGKTTVYPASDGIPNIVSIIDLIKRTNARSLMTVPFLLDDVINNEEGLRVLAGLDFVGTGGAALGPGVGDKLAAAGIKLLNFYGTTESGPLSLVFVPKDNYNWKFFRLRTDMNFEIANLEPKDGVKRYRLTIRAFGEGEDQEIADQLIRNDEYPETDFAAVGRDDDVIVLATGEKASPQILENMLTEAPMVKAAIAFGENQFNLGVIVEPKEPLAEGGEAAFKELIWPIIVAAGQKMDAHSVIPSQEAVIVVPNGVRVPRTDKGSIARKEVYALFADAMKDVYEKLARAVGGADLKPLDLETLEEDIKALIIEHSGLKVPAEGLSAEESLFDFGLDSLQALKLRRVLAAAANKSEAMKDVNVDKVIPPEFVYLNPSVAQMAAAIKNPSAGSAAPTVDANAYKGVEKFAEQYALPGASAEEKAPSVRERAIVVVTGSSGSLGSHVVATLARDPKVMRVVVMVRQGSKPFDREPWTSRGINLKEDEFAKIVPLPVDPTAENLGVDPMMYGMLQNNLTHIVHAAWPMNYLTTLPSFQYQFEYLSGLLKLATSGNTANKRRFIFVSSIAAVARLSLSNSGAMISETPVEPVDAACGIGYADGKLVCEKILEKAAVSHAGQLEIAYVRCGQMTGSRATGAWNADEQIPMIFRTAKNLGVLPRIPGTLSWIPVDDAAQYIMDLSFFEGALPIASHLENPVRQSWADLMDGAGKFLGIQKSVSWPEWLELAGAAEDGPQDKYPVKKLFAFFKFSFGPMASGAVILGTDVARAHSATIKNMGALDASTIMKYFLHWQKINYL.

The interval 21-378 is adenylation (A) domain; it reads STKRQPGAVC…FRLRTDMNFE (358 aa). Residues histidine 251, 344–345, threonine 349, and 423–426 each bind AMP; these read NF and AVGR. In terms of domain architecture, Carrier spans 564–651; the sequence is ETLEEDIKAL…QMAAAIKNPS (88 aa). O-(pantetheine 4'-phosphoryl)serine is present on serine 600. Positions 693-1025 are reductase (R) domain; sequence IVVVTGSSGS…SGAVILGTDV (333 aa). Residues 700 to 703, 783 to 785, tyrosine 858, and lysine 862 each bind NADP(+); these read SGSL and AAW.

The protein belongs to the adenylate-forming reductase family.

The catalysed reaction is ilicicolinate B + AH2 + ATP = ilicicolin B + A + AMP + diphosphate. It participates in secondary metabolite biosynthesis; terpenoid biosynthesis. Nonribosomal peptide synthase-like protein; part of the cluster that mediates the biosynthesis of LL-Z1272-beta, also known as ilicicolin B, a prenylated aryl-aldehyde produced by several fungi and that serves as a key pathway intermediate for many fungal meroterpenoids. The first step in the pathway is performed by the non-reducing polyketide synthase stbA that produces orsellinic acid by condensing acetyl-CoA with 3 malonyl-CoA units. The prenyltransferase stbC then prenylates orsenilic acid into grifolic acid. Finally, grifolic acid is reduced to ilicicolin B by the NRPS-like protein stbB. This chain is Adenylate-forming reductase stbB, found in Stachybotrys bisbyi (Hyalostachybotrys bisbyi).